The sequence spans 367 residues: DNA replication and repair protein RecF (367 aa).

30–37 contacts ATP; that stretch reads GENAQGKT.

This sequence belongs to the RecF family.

The protein localises to the cytoplasm. The RecF protein is involved in DNA metabolism; it is required for DNA replication and normal SOS inducibility. RecF binds preferentially to single-stranded, linear DNA. It also seems to bind ATP. This is DNA replication and repair protein RecF from Chlamydia caviae (strain ATCC VR-813 / DSM 19441 / 03DC25 / GPIC) (Chlamydophila caviae).